The following is a 626-amino-acid chain: Nuclear receptor subfamily 4 group A member 3 (626 aa).

An activation function (AF)-1 domain region spans residues 1-108 (MPCVQAQYSP…HHHHHHHHHH (108 aa)). The segment at 1–138 (MPCVQAQYSP…PSTSMYFKQS (138 aa)) is required for DNA-PK heterotrimer. Positions 1-291 (MPCVQAQYSP…SRSSSSGEGT (291 aa)) are interaction with NCOA1, NCOA2, NCOA3 and KAT2B. 3 disordered regions span residues 92 to 152 (PSYH…PPQA), 192 to 211 (HFKP…GHHL), and 265 to 284 (PTAS…PSRS). The segment covering 93-110 (SYHHHHHHHHHHHHHHQQ) has biased composition (basic residues). 2 stretches are compositionally biased toward pro residues: residues 140–149 (PSTPTTPAFP) and 195–204 (PSPPHPPAPS). Residues 268–284 (SSLLGESPSLPSPPSRS) are compositionally biased toward low complexity. Residues 289-364 (EGTCAVCGDN…VGMVKEVVRT (76 aa)) constitute a DNA-binding region (nuclear receptor). 2 NR C4-type zinc fingers span residues 292–312 (CAVC…CEGC) and 328–352 (CLAN…FQKC). Residues 364–394 (TDSLKGRRGRLPSKPKSPLQQEPSQPSPPSP) form a disordered region. Over residues 377 to 387 (KPKSPLQQEPS) the composition is skewed to low complexity. Residues 379-626 (KSPLQQEPSQ…DKLFLDTLPF (248 aa)) are interaction with KAT2B. The region spanning 394-623 (PPICMMNALV…SIIDKLFLDT (230 aa)) is the NR LBD domain.

It belongs to the nuclear hormone receptor family. NR4 subfamily. As to quaternary structure, interacts with SIX3 (via homeobox); differentially regulates the transcriptional activities of NR4A3. Interacts with the constituents of DNA-PK heterotrimer PRKDC, XRCC6 and XRCC5; phosphorylates and prevents NR4A3 ubiquitinylation and degradation. Interacts with NCOA2; potentiates the activity of the NR4A3. Interacts with NCOA1, NCOA3, MED1 and KAT2B. Interacts with EP300 and NCOA2; mediates the recruitment of MED1 in the coactivator complex. Interacts with NR3C1 (via nuclear receptor DNA-binding domain); the interactions represses transcription activity of NR4A3 on the POMC promoter Nur response element (NurRE). Interacts with TRIM28; the interactions potentiates NR4A3 activity on NurRE promoter. Binds DNA as a monomer and homodimer. Interacts with PARP1; activates PARP1 by improving acetylation of PARP1 and suppressing the interaction between PARP1 and SIRT1. Phosphorylated by PRKDC. Isoform alpha is highly expressed in skeletal muscle. Isoform beta is highly expressed in skeletal muscle and low expressed in fetal brain and placenta.

Its subcellular location is the nucleus. Functionally, transcriptional activator that binds to regulatory elements in promoter regions in a cell- and response element (target)-specific manner. Induces gene expression by binding as monomers to the NR4A1 response element (NBRE) 5'-AAAAGGTCA-3' site and as homodimers to the Nur response element (NurRE) site in the promoter of their regulated target genes. Plays a role in the regulation of proliferation, survival and differentiation of many different cell types and also in metabolism and inflammation. Mediates proliferation of vascular smooth muscle, myeloid progenitor cell and type B pancreatic cells; promotes mitogen-induced vascular smooth muscle cell proliferation through transactivation of SKP2 promoter by binding a NBRE site. Upon PDGF stimulation, stimulates vascular smooth muscle cell proliferation by regulating CCND1 and CCND2 expression. In islets, induces type B pancreatic cell proliferation through up-regulation of genes that activate cell cycle, as well as genes that cause degradation of the CDKN1A. Negatively regulates myeloid progenitor cell proliferation by repressing RUNX1 in a NBRE site-independent manner. During inner ear, plays a role as a key mediator of the proliferative growth phase of semicircular canal development. Also mediates survival of neuron and smooth muscle cells; mediates CREB-induced neuronal survival, and during hippocampus development, plays a critical role in pyramidal cell survival and axonal guidance. Is required for S phase entry of the cell cycle and survival of smooth muscle cells by inducing CCND1, resulting in RB1 phosphorylation. Binds to NBRE motif in CCND1 promoter, resulting in the activation of the promoter and CCND1 transcription. Also plays a role in inflammation; upon TNF stimulation, mediates monocyte adhesion by inducing the expression of VCAM1 and ICAM1 by binding to the NBRE consensus site. In mast cells activated by Fc-epsilon receptor cross-linking, promotes the synthesis and release of cytokines but impairs events leading to degranulation. Also plays a role in metabolism; by modulating feeding behavior; and by playing a role in energy balance by inhibiting the glucocorticoid-induced orexigenic neuropeptides AGRP expression, at least in part by forming a complex with activated NR3C1 on the AGRP- glucocorticoid response element (GRE), and thus weakening the DNA binding activity of NR3C1. Upon catecholamines stimulation, regulates gene expression that controls oxidative metabolism in skeletal muscle. Plays a role in glucose transport by regulating translocation of the SLC2A4 glucose transporter to the cell surface. Finally, during gastrulation plays a crucial role in the formation of anterior mesoderm by controlling cell migration. Inhibits adipogenesis. Also participates in cardiac hypertrophy by activating PARP1. This is Nuclear receptor subfamily 4 group A member 3 (NR4A3) from Homo sapiens (Human).